Reading from the N-terminus, the 472-residue chain is Protein nucleotidyltransferase YdiU (472 aa).

Residues Gly-86, Gly-88, Arg-89, Lys-109, Asp-121, Gly-122, Arg-172, and Arg-179 each coordinate ATP. Asp-244 serves as the catalytic Proton acceptor. Residues Asn-245 and Asp-254 each contribute to the Mg(2+) site. ATP is bound at residue Asp-254.

This sequence belongs to the SELO family. Mg(2+) is required as a cofactor. Mn(2+) serves as cofactor.

It catalyses the reaction L-seryl-[protein] + ATP = 3-O-(5'-adenylyl)-L-seryl-[protein] + diphosphate. It carries out the reaction L-threonyl-[protein] + ATP = 3-O-(5'-adenylyl)-L-threonyl-[protein] + diphosphate. The enzyme catalyses L-tyrosyl-[protein] + ATP = O-(5'-adenylyl)-L-tyrosyl-[protein] + diphosphate. The catalysed reaction is L-histidyl-[protein] + UTP = N(tele)-(5'-uridylyl)-L-histidyl-[protein] + diphosphate. It catalyses the reaction L-seryl-[protein] + UTP = O-(5'-uridylyl)-L-seryl-[protein] + diphosphate. It carries out the reaction L-tyrosyl-[protein] + UTP = O-(5'-uridylyl)-L-tyrosyl-[protein] + diphosphate. Nucleotidyltransferase involved in the post-translational modification of proteins. It can catalyze the addition of adenosine monophosphate (AMP) or uridine monophosphate (UMP) to a protein, resulting in modifications known as AMPylation and UMPylation. This chain is Protein nucleotidyltransferase YdiU, found in Ruegeria pomeroyi (strain ATCC 700808 / DSM 15171 / DSS-3) (Silicibacter pomeroyi).